Here is a 1886-residue protein sequence, read N- to C-terminus: Polyprotein P3 (1886 aa).

3 disordered regions span residues 1–24 (MATRRLPAVTQTDGSRTATESGVP), 420–466 (RCDS…MQDD), and 478–529 (RMKK…NQPE). A compositionally biased stretch (polar residues) spans 9–20 (VTQTDGSRTATE). Positions 488 to 498 (QQALSSQAQEE) are enriched in low complexity. The CCHC-type zinc finger occupies 879 to 896 (CKCYICGQEGHYANQCRN). A Peptidase A2 domain is found at 1215 to 1292 (INAIVDTGAT…GLSPGIQMII (78 aa)). Residue aspartate 1220 is the For protease activity of the active site. The Reverse transcriptase domain occupies 1425–1615 (LLQMKVIRPS…PEIDFLGASL (191 aa)). An RNase H type-1 domain is found at 1706–1841 (KDSFIIIETD…ADALSRMINF (136 aa)). The Mg(2+) site is built by aspartate 1715, glutamate 1758, aspartate 1784, and aspartate 1833.

In terms of processing, polyprotein P3 is presumably proteolytically cleaved into several chains by viral protease.

It carries out the reaction Endonucleolytic cleavage to 5'-phosphomonoester.. It catalyses the reaction DNA(n) + a 2'-deoxyribonucleoside 5'-triphosphate = DNA(n+1) + diphosphate. Capsid protein self assembles to form a bacilliform capsid about 90-900 nm in length. The capsid encapsulates the genomic dsDNA. Following virus entry into host cell, provides nuclear import of the viral genome. Virus particles do not enter the nucleus, but are targeted to the nuclear membrane through the interaction with host importins. The chain is Polyprotein P3 from Commelina yellow mottle virus (CoYMV).